A 459-amino-acid chain; its full sequence is UDP-N-acetylmuramate--L-alanine ligase (459 aa).

An ATP-binding site is contributed by 113-119 (GSHGKTT).

It belongs to the MurCDEF family.

The protein resides in the cytoplasm. It catalyses the reaction UDP-N-acetyl-alpha-D-muramate + L-alanine + ATP = UDP-N-acetyl-alpha-D-muramoyl-L-alanine + ADP + phosphate + H(+). Its pathway is cell wall biogenesis; peptidoglycan biosynthesis. Functionally, cell wall formation. In Persephonella marina (strain DSM 14350 / EX-H1), this protein is UDP-N-acetylmuramate--L-alanine ligase.